Here is a 257-residue protein sequence, read N- to C-terminus: MQKLESRGFILFNRNYRENDKLVKIFTKQAGKRMFFVRGGGSGKLSAVIQPLNIAEFMMTVNDEGLSFIEDYSQAESFKEITSDIFKLSYATYLAALTDAAIADGVVDAQLFAFLEKTLVLMEEGLDYEILTNIFEIQVLDRFGVRLNFHECVFCHRVGLPFDFSYKFSGLLCPNHYEEDERRSHLDPNVPYLLDRFQGLSFEELRSISVKDEMKRKLRQFIDELYDNYVGIHLKSKKFIDNLNSWGHIMSKEDNAD.

The protein belongs to the RecO family.

Its function is as follows. Involved in DNA repair and RecF pathway recombination. This chain is DNA repair protein RecO, found in Streptococcus thermophilus (strain CNRZ 1066).